The sequence spans 348 residues: Dihydroorotase (348 aa).

The Zn(2+) site is built by H14 and H16. Residues 16 to 18 (HLR) and N42 each bind substrate. K100, H137, and H175 together coordinate Zn(2+). The residue at position 100 (K100) is an N6-carboxylysine. Position 137 (H137) interacts with substrate. L220 is a substrate binding site. D248 is a binding site for Zn(2+). The active site involves D248. Substrate is bound by residues H252 and A264.

This sequence belongs to the metallo-dependent hydrolases superfamily. DHOase family. Class II DHOase subfamily. In terms of assembly, homodimer. Zn(2+) is required as a cofactor.

It carries out the reaction (S)-dihydroorotate + H2O = N-carbamoyl-L-aspartate + H(+). It functions in the pathway pyrimidine metabolism; UMP biosynthesis via de novo pathway; (S)-dihydroorotate from bicarbonate: step 3/3. Catalyzes the reversible cyclization of carbamoyl aspartate to dihydroorotate. The protein is Dihydroorotase of Pseudomonas putida (strain W619).